The sequence spans 503 residues: Probable DNA ligase (503 aa).

E210 lines the ATP pocket. K212 functions as the N6-AMP-lysine intermediate in the catalytic mechanism. Positions 217, 232, 261, 296, 367, and 373 each coordinate ATP.

The protein belongs to the ATP-dependent DNA ligase family. Requires Mg(2+) as cofactor.

It carries out the reaction ATP + (deoxyribonucleotide)n-3'-hydroxyl + 5'-phospho-(deoxyribonucleotide)m = (deoxyribonucleotide)n+m + AMP + diphosphate.. In terms of biological role, DNA ligase that seals nicks in double-stranded DNA during DNA replication, DNA recombination and DNA repair. This is Probable DNA ligase from Rhodococcus jostii (strain RHA1).